Here is a 238-residue protein sequence, read N- to C-terminus: MHFEPALDCALLQKRYKRFLADVTYQSGDTGTIHCANTGAMTGCATPGDKVWYSTSNNTKRKYPHSWEITETEQGHLICVNTIRANQLAVEAIEQGWIKELSGYERLQTEVKYGHENSRIDILLSASDRPACYIEVKSVTLLDDTEPGQGFFPDAVTTRGQKHLRELTEMAQNGSRAILLFAVLHSGIEKVAAALHIDAKYSQLLKQAQKAGVEVLCYKAEISNTEIKLNSAIAFNNS.

It belongs to the SfsA family.

The chain is Sugar fermentation stimulation protein homolog from Vibrio vulnificus (strain CMCP6).